A 513-amino-acid polypeptide reads, in one-letter code: ATP synthase subunit alpha (513 aa).

Gly-169–Thr-176 provides a ligand contact to ATP.

Belongs to the ATPase alpha/beta chains family. In terms of assembly, F-type ATPases have 2 components, CF(1) - the catalytic core - and CF(0) - the membrane proton channel. CF(1) has five subunits: alpha(3), beta(3), gamma(1), delta(1), epsilon(1). CF(0) has three main subunits: a(1), b(2) and c(9-12). The alpha and beta chains form an alternating ring which encloses part of the gamma chain. CF(1) is attached to CF(0) by a central stalk formed by the gamma and epsilon chains, while a peripheral stalk is formed by the delta and b chains.

It is found in the cell inner membrane. The catalysed reaction is ATP + H2O + 4 H(+)(in) = ADP + phosphate + 5 H(+)(out). Produces ATP from ADP in the presence of a proton gradient across the membrane. The alpha chain is a regulatory subunit. The sequence is that of ATP synthase subunit alpha from Tolumonas auensis (strain DSM 9187 / NBRC 110442 / TA 4).